Reading from the N-terminus, the 227-residue chain is Glutathione S-transferase U7 (227 aa).

The region spanning Glu8–Pro87 is the GST N-terminal domain. Glutathione-binding positions include Ser18–Pro19, Asn44–Lys45, Met58–Ile59, and Glu71–Ser72. The GST C-terminal domain occupies Asp92 to Ile215.

It belongs to the GST superfamily. Tau family.

Its subcellular location is the cytoplasm. It localises to the cytosol. It carries out the reaction RX + glutathione = an S-substituted glutathione + a halide anion + H(+). May be involved in the conjugation of reduced glutathione to a wide number of exogenous and endogenous hydrophobic electrophiles and have a detoxification role against certain herbicides. In Arabidopsis thaliana (Mouse-ear cress), this protein is Glutathione S-transferase U7 (GSTU7).